Reading from the N-terminus, the 821-residue chain is High affinity potassium transporter (821 aa).

Polar residues predominate over residues Met-1–Asn-10. The segment at Met-1 to Met-47 is disordered. Residues Met-1–Gln-57 are Cytoplasmic-facing. Positions Asn-17–Asn-27 are enriched in low complexity. Residues Val-58–Leu-78 form a helical membrane-spanning segment. Over Tyr-79–Ser-101 the chain is Extracellular. A helical transmembrane segment spans residues Ile-102–Leu-122. Residues Gly-123–Lys-190 lie on the Cytoplasmic side of the membrane. A helical membrane pass occupies residues Leu-191 to Met-211. Residues Ser-212–Asp-238 lie on the Extracellular side of the membrane. A helical membrane pass occupies residues Val-239–Asn-259. A topological domain (cytoplasmic) is located at residue Lys-260. The helical transmembrane segment at Ile-261–Ile-281 threads the bilayer. Residues Tyr-282–His-306 lie on the Extracellular side of the membrane. The helical transmembrane segment at Ser-307–Ala-327 threads the bilayer. Topologically, residues Asp-328–Thr-340 are cytoplasmic. The helical transmembrane segment at Leu-341–Ile-361 threads the bilayer. Over Lys-362–Val-386 the chain is Extracellular. A helical transmembrane segment spans residues Met-387–Phe-407. The Cytoplasmic portion of the chain corresponds to Ser-408–Lys-434. A helical membrane pass occupies residues Val-435–Phe-455. Residues Lys-456–Ala-463 lie on the Extracellular side of the membrane. Asn-460 carries an N-linked (GlcNAc...) asparagine glycan. A helical membrane pass occupies residues Ala-464 to Met-484. At Thr-485 to Asn-491 the chain is on the cytoplasmic side. Residues Ile-492 to Ser-512 form a helical membrane-spanning segment. The Extracellular portion of the chain corresponds to Asn-513–Lys-516. The chain crosses the membrane as a helical span at residues Ile-517 to Phe-537. Topologically, residues Trp-538–Ile-821 are cytoplasmic.

The protein belongs to the HAK/KUP transporter (TC 2.A.72) family.

The protein resides in the membrane. Its function is as follows. Major high-affinity potassium uptake protein. This Schwanniomyces occidentalis (Yeast) protein is High affinity potassium transporter (HAK1).